Reading from the N-terminus, the 182-residue chain is Dual-action ribosomal maturation protein DarP (182 aa).

Belongs to the DarP family.

The protein localises to the cytoplasm. Functionally, member of a network of 50S ribosomal subunit biogenesis factors which assembles along the 30S-50S interface, preventing incorrect 23S rRNA structures from forming. Promotes peptidyl transferase center (PTC) maturation. In Yersinia pseudotuberculosis serotype O:1b (strain IP 31758), this protein is Dual-action ribosomal maturation protein DarP.